Consider the following 208-residue polypeptide: Ectodysplasin-A receptor-associated adapter protein (208 aa).

A compositionally biased stretch (basic and acidic residues) spans 1 to 18 (MASPDDPLRSDHMAKEPV). The interval 1 to 99 (MASPDDPLRS…KGSCSCPSCS (99 aa)) is disordered. Polar residues predominate over residues 49 to 61 (TVNSNCPPNSDDQ). The Death domain occupies 116–195 (DTIRIKLDPC…KILRRWVDEE (80 aa)).

Binds EDAR. Self-associates and binds TRAF1, TRAF2 and TRAF3.

The protein resides in the cytoplasm. Its function is as follows. Adapter protein that interacts with EDAR DEATH domain and couples the receptor to EDA signaling pathway during morphogenesis of ectodermal organs. Mediates the activation of NF-kappa-B. This chain is Ectodysplasin-A receptor-associated adapter protein (Edaradd), found in Mus musculus (Mouse).